Here is a 624-residue protein sequence, read N- to C-terminus: Chaperone protein HtpG (624 aa).

Residues 1–336 form an a; substrate-binding region; the sequence is MKGQETRGFQ…SNDLPLNVSR (336 aa). Positions 337 to 552 are b; the sequence is EILQDSSITR…NDEMSTQMAK (216 aa). Residues 553–624 are c; that stretch reads LFAAAGQAVP…IRRMNQLLVS (72 aa).

The protein belongs to the heat shock protein 90 family. As to quaternary structure, homodimer.

It localises to the cytoplasm. Molecular chaperone. Has ATPase activity. The sequence is that of Chaperone protein HtpG from Cronobacter sakazakii (strain ATCC BAA-894) (Enterobacter sakazakii).